A 555-amino-acid chain; its full sequence is GPI-anchor transamidase component PIGS (555 aa).

At 2–18 (AATGAAATDLEVVRGKR) the chain is on the cytoplasmic side. Residues R15 and R18 each contribute to the a cardiolipin site. The chain crosses the membrane as a helical span at residues 19–39 (AALFFATVVIVLGLPLWWKTT). Residues 40 to 517 (ETYRAPLPYS…LHLLYFPDDQ (478 aa)) lie on the Lumenal side of the membrane. Residues N267 and N370 are each glycosylated (N-linked (GlcNAc...) asparagine). A helical membrane pass occupies residues 518-532 (KFAIYIPLFLPMAVP). At 533–555 (ILLSLFKIFLETRKSWKKPEKTD) the chain is on the cytoplasmic side.

It belongs to the PIGS family. As to quaternary structure, heteropentamer. Part of the GPI-anchor transamidase complex, consisting of PIGK, PIGT, PIGS, PIGU and GAA1.

It is found in the endoplasmic reticulum membrane. The protein operates within glycolipid biosynthesis; glycosylphosphatidylinositol-anchor biosynthesis. In terms of biological role, component of the glycosylphosphatidylinositol-anchor (GPI-anchor) transamidase (GPI-T) complex that catalyzes the formation of the linkage between a proprotein and a GPI-anchor and participates in GPI anchored protein biosynthesis. The polypeptide is GPI-anchor transamidase component PIGS (Bos taurus (Bovine)).